A 570-amino-acid polypeptide reads, in one-letter code: Protein HEATR9 (570 aa).

The protein is Protein HEATR9 (HEATR9) of Macaca fascicularis (Crab-eating macaque).